We begin with the raw amino-acid sequence, 367 residues long: MKTRFPSPFFILYRRLTVAISFGKVLGWGCLGRILSWMFSCIASFRRKLFCSAPYRASSTVISVGNIVLGGSGKTPTVLWLAENLRARGYSCAVLSRGYKGKCSRQRKLIVVDPKMHSAAYVGDEPLLMAGKLQDGAVFVHKDRRVSAKHAAKNFDILILDDGFQNTKLHKDVEIVVVNGQDPLGGAEFFPRGRLRDFPNRLKEADFIIVNGSCCLENQKLLNTWSSSPKIFVEPCISQVLWEPSGEQLPLDSLSGLAAGVFCGLGFPQGFLDMLKRAGVKILGTYLLPDHAGITKKELHYFSSKIALRQGRGILCTEKDGVKLGNLVHEQGILPVGKVQMRFDFANHEDSGVSLLNRIDQIHNGKR.

Residue 68–75 (VLGGSGKT) participates in ATP binding.

It belongs to the LpxK family.

It catalyses the reaction a lipid A disaccharide + ATP = a lipid IVA + ADP + H(+). The protein operates within glycolipid biosynthesis; lipid IV(A) biosynthesis; lipid IV(A) from (3R)-3-hydroxytetradecanoyl-[acyl-carrier-protein] and UDP-N-acetyl-alpha-D-glucosamine: step 6/6. Functionally, transfers the gamma-phosphate of ATP to the 4'-position of a tetraacyldisaccharide 1-phosphate intermediate (termed DS-1-P) to form tetraacyldisaccharide 1,4'-bis-phosphate (lipid IVA). This chain is Tetraacyldisaccharide 4'-kinase, found in Chlamydia caviae (strain ATCC VR-813 / DSM 19441 / 03DC25 / GPIC) (Chlamydophila caviae).